Reading from the N-terminus, the 925-residue chain is Ubp5-interacting protein ftp105 (925 aa).

Over residues 650-664 (EGSSDFESKSSDNTS) the composition is skewed to low complexity. The segment at 650–671 (EGSSDFESKSSDNTSLDGTPLQ) is disordered.

It belongs to the hid-1 family. Interacts with ubp5.

Its subcellular location is the cytoplasm. It is found in the golgi apparatus. In terms of biological role, required for the localization of ubp5 to the Golgi apparatus. Involved in detoxification of cadmium ion. This Schizosaccharomyces pombe (strain 972 / ATCC 24843) (Fission yeast) protein is Ubp5-interacting protein ftp105 (ftp105).